The chain runs to 877 residues: Alanine--tRNA ligase (877 aa).

His562, His566, Cys664, and His668 together coordinate Zn(2+).

The protein belongs to the class-II aminoacyl-tRNA synthetase family. Zn(2+) serves as cofactor.

It is found in the cytoplasm. The catalysed reaction is tRNA(Ala) + L-alanine + ATP = L-alanyl-tRNA(Ala) + AMP + diphosphate. Catalyzes the attachment of alanine to tRNA(Ala) in a two-step reaction: alanine is first activated by ATP to form Ala-AMP and then transferred to the acceptor end of tRNA(Ala). Also edits incorrectly charged Ser-tRNA(Ala) and Gly-tRNA(Ala) via its editing domain. The sequence is that of Alanine--tRNA ligase from Synechocystis sp. (strain ATCC 27184 / PCC 6803 / Kazusa).